We begin with the raw amino-acid sequence, 276 residues long: 2,3,4,5-tetrahydropyridine-2,6-dicarboxylate N-succinyltransferase (276 aa).

Positions 107 and 144 each coordinate substrate.

This sequence belongs to the transferase hexapeptide repeat family. Homotrimer.

Its subcellular location is the cytoplasm. It carries out the reaction (S)-2,3,4,5-tetrahydrodipicolinate + succinyl-CoA + H2O = (S)-2-succinylamino-6-oxoheptanedioate + CoA. The protein operates within amino-acid biosynthesis; L-lysine biosynthesis via DAP pathway; LL-2,6-diaminopimelate from (S)-tetrahydrodipicolinate (succinylase route): step 1/3. This chain is 2,3,4,5-tetrahydropyridine-2,6-dicarboxylate N-succinyltransferase, found in Gluconobacter oxydans (strain 621H) (Gluconobacter suboxydans).